We begin with the raw amino-acid sequence, 471 residues long: Argininosuccinate lyase (471 aa).

The protein belongs to the lyase 1 family. Argininosuccinate lyase subfamily.

It localises to the cytoplasm. It carries out the reaction 2-(N(omega)-L-arginino)succinate = fumarate + L-arginine. The protein operates within amino-acid biosynthesis; L-arginine biosynthesis; L-arginine from L-ornithine and carbamoyl phosphate: step 3/3. In Paramagnetospirillum magneticum (strain ATCC 700264 / AMB-1) (Magnetospirillum magneticum), this protein is Argininosuccinate lyase.